The primary structure comprises 299 residues: Oxygen-dependent coproporphyrinogen-III oxidase (299 aa).

S92 provides a ligand contact to substrate. Positions 96 and 106 each coordinate Mn(2+). H106 acts as the Proton donor in catalysis. Residue 108–110 (NVR) coordinates substrate. Positions 145 and 175 each coordinate Mn(2+). Positions 240-275 (YVEFNLVWDRGTLFGLQTGGRTESILMSMPPLVRWE) are important for dimerization. 258 to 260 (GGR) is a substrate binding site.

The protein belongs to the aerobic coproporphyrinogen-III oxidase family. As to quaternary structure, homodimer. Requires Mn(2+) as cofactor.

The protein localises to the cytoplasm. The catalysed reaction is coproporphyrinogen III + O2 + 2 H(+) = protoporphyrinogen IX + 2 CO2 + 2 H2O. It participates in porphyrin-containing compound metabolism; protoporphyrin-IX biosynthesis; protoporphyrinogen-IX from coproporphyrinogen-III (O2 route): step 1/1. In terms of biological role, involved in the heme biosynthesis. Catalyzes the aerobic oxidative decarboxylation of propionate groups of rings A and B of coproporphyrinogen-III to yield the vinyl groups in protoporphyrinogen-IX. The sequence is that of Oxygen-dependent coproporphyrinogen-III oxidase from Escherichia coli O8 (strain IAI1).